The chain runs to 584 residues: 2-succinyl-5-enolpyruvyl-6-hydroxy-3-cyclohexene-1-carboxylate synthase (584 aa).

It belongs to the TPP enzyme family. MenD subfamily. As to quaternary structure, homodimer. It depends on Mg(2+) as a cofactor. Mn(2+) is required as a cofactor. Thiamine diphosphate serves as cofactor.

The catalysed reaction is isochorismate + 2-oxoglutarate + H(+) = 5-enolpyruvoyl-6-hydroxy-2-succinyl-cyclohex-3-ene-1-carboxylate + CO2. It functions in the pathway quinol/quinone metabolism; 1,4-dihydroxy-2-naphthoate biosynthesis; 1,4-dihydroxy-2-naphthoate from chorismate: step 2/7. The protein operates within quinol/quinone metabolism; menaquinone biosynthesis. Functionally, catalyzes the thiamine diphosphate-dependent decarboxylation of 2-oxoglutarate and the subsequent addition of the resulting succinic semialdehyde-thiamine pyrophosphate anion to isochorismate to yield 2-succinyl-5-enolpyruvyl-6-hydroxy-3-cyclohexene-1-carboxylate (SEPHCHC). This chain is 2-succinyl-5-enolpyruvyl-6-hydroxy-3-cyclohexene-1-carboxylate synthase, found in Bacillus thuringiensis (strain Al Hakam).